The following is a 154-amino-acid chain: Protein-export protein SecB (154 aa).

It belongs to the SecB family. As to quaternary structure, homotetramer, a dimer of dimers. One homotetramer interacts with 1 SecA dimer.

The protein localises to the cytoplasm. One of the proteins required for the normal export of preproteins out of the cell cytoplasm. It is a molecular chaperone that binds to a subset of precursor proteins, maintaining them in a translocation-competent state. It also specifically binds to its receptor SecA. This is Protein-export protein SecB from Vibrio parahaemolyticus serotype O3:K6 (strain RIMD 2210633).